We begin with the raw amino-acid sequence, 499 residues long: Circadian clock oscillator protein KaiC (499 aa).

2 consecutive KaiC domains span residues 1–243 and 257–499; these read MQSS…VSVF and VRIS…DERA. Positions 45, 46, 47, 48, 49, 85, 220, 221, 222, 224, 226, 286, 287, 288, 289, 290, 291, and 292 each coordinate ATP. Position 49 (threonine 49) interacts with Mg(2+). Threonine 291 serves as a coordination point for Mg(2+). Position 314 (glutamate 314) interacts with Mg(2+). Tryptophan 327 contributes to the ATP binding site. Phosphoserine; by autocatalysis is present on serine 427. Threonine 428 is modified (phosphothreonine; by autocatalysis). Positions 447, 453, 454, 455, 457, 459, and 461 each coordinate ATP.

This sequence belongs to the KaiC family. Homohexamer; hexamerization is dependent on ATP-binding. Component of the KaiBC complex. KaiC interacts with SasA, activating its autokinase function and leading to RpaA activation. It depends on Mg(2+) as a cofactor. Phosphorylated on serine and threonine residues by autocatalysis. Has a 4 step phosphorylation cycle; the autokinase acts first on Thr-428, then Ser-427. When Ser-427 is modified KaiC switches to an autophosphatase mode, acting first on phospho-Thr-428 then phospho-Ser-427.

It catalyses the reaction L-seryl-[protein] + ATP = O-phospho-L-seryl-[protein] + ADP + H(+). The catalysed reaction is L-threonyl-[protein] + ATP = O-phospho-L-threonyl-[protein] + ADP + H(+). It carries out the reaction ATP + H2O = ADP + phosphate + H(+). Functionally, central component of the KaiBC oscillator complex, which constitutes the main circadian regulator in cyanobacteria. Its composition changes during the circadian cycle to control KaiC phosphorylation. Autophosphorylates and has a weak ATPase activity; ATPase activity defines the circadian period. In Prochlorococcus marinus (strain MIT 9313), this protein is Circadian clock oscillator protein KaiC.